A 360-amino-acid chain; its full sequence is Peptide chain release factor 1 (360 aa).

Glutamine 234 carries the N5-methylglutamine modification. Residues 285–305 form a disordered region; that stretch reads RAQGIAEDRKSQVGTGDRSER.

Belongs to the prokaryotic/mitochondrial release factor family. Post-translationally, methylated by PrmC. Methylation increases the termination efficiency of RF1.

Its subcellular location is the cytoplasm. Functionally, peptide chain release factor 1 directs the termination of translation in response to the peptide chain termination codons UAG and UAA. The polypeptide is Peptide chain release factor 1 (Clostridium beijerinckii (strain ATCC 51743 / NCIMB 8052) (Clostridium acetobutylicum)).